A 118-amino-acid polypeptide reads, in one-letter code: Late cornified envelope protein 1C (118 aa).

A compositionally biased stretch (low complexity) spans 1-10; that stretch reads MSCQQSQQQC. 2 disordered regions span residues 1-23 and 87-118; these read MSCQ…CPPK and CHRP…GGCC. A compositionally biased stretch (pro residues) spans 11-23; the sequence is QPPPKCTPKCPPK. Low complexity predominate over residues 90 to 103; the sequence is PQSSGCCSQPSGGS. The span at 104-118 shows a compositional bias: gly residues; it reads SCCGGGSGQHSGGCC.

The protein belongs to the LCE family. As to quaternary structure, interacts with CYSRT1. As to expression, skin-specific. Expression was readily detected in adult trunk skin, adult arm skin, fetal skin, penal skin, vulva, esophagus and tongue. Not expressed in the cervix, rectum, lung, colon, or placenta.

In terms of biological role, precursors of the cornified envelope of the stratum corneum. This Homo sapiens (Human) protein is Late cornified envelope protein 1C (LCE1C).